The chain runs to 266 residues: Glucosamine-6-phosphate deaminase (266 aa).

Asp72 (proton acceptor; for enolization step) is an active-site residue. Residue Asp141 is the For ring-opening step of the active site. His143 acts as the Proton acceptor; for ring-opening step in catalysis. Glu148 (for ring-opening step) is an active-site residue.

Belongs to the glucosamine/galactosamine-6-phosphate isomerase family. NagB subfamily. Homohexamer; trimer of disulfide-linked dimers.

The catalysed reaction is alpha-D-glucosamine 6-phosphate + H2O = beta-D-fructose 6-phosphate + NH4(+). It participates in amino-sugar metabolism; N-acetylneuraminate degradation; D-fructose 6-phosphate from N-acetylneuraminate: step 5/5. Allosterically activated by N-acetylglucosamine 6-phosphate (GlcNAc6P). Catalyzes the reversible isomerization-deamination of glucosamine 6-phosphate (GlcN6P) to form fructose 6-phosphate (Fru6P) and ammonium ion. The chain is Glucosamine-6-phosphate deaminase from Shigella boydii serotype 18 (strain CDC 3083-94 / BS512).